Here is a 493-residue protein sequence, read N- to C-terminus: Probable GTP-binding protein OBGM, mitochondrial (493 aa).

Residues 1–28 (MWLIRAIVPVRYLGSYKRPQKPPWMRNP) constitute a mitochondrion transit peptide. The Obg domain maps to 48–303 (TRMRDRFTLY…AVLILELKSI (256 aa)). 2 disordered regions span residues 65-89 (SGCS…GGRG) and 146-215 (GEIP…EDDD). Residues 187–196 (SESDQDDTEQ) are compositionally biased toward acidic residues. The OBG-type G domain occupies 304-476 (ADVGLVGMPN…LKDGLKMLVD (173 aa)). GTP is bound by residues 310–317 (GMPNAGKS) and 356–360 (DIPGL).

The protein belongs to the TRAFAC class OBG-HflX-like GTPase superfamily. OBG GTPase family.

It is found in the mitochondrion. Functionally, may bind GTP and have GTPase activity. The chain is Probable GTP-binding protein OBGM, mitochondrial (ATOBGM) from Arabidopsis thaliana (Mouse-ear cress).